A 339-amino-acid chain; its full sequence is DNA-directed RNA polymerase subunit alpha (339 aa).

Positions 1 to 235 (MTIQKNWQEL…DQLNVFVNFE (235 aa)) are alpha N-terminal domain (alpha-NTD). An alpha C-terminal domain (alpha-CTD) region spans residues 251–339 (FNPAFLKKVD…ELAKRFEDHY (89 aa)).

This sequence belongs to the RNA polymerase alpha chain family. Homodimer. The RNAP catalytic core consists of 2 alpha, 1 beta, 1 beta' and 1 omega subunit. When a sigma factor is associated with the core the holoenzyme is formed, which can initiate transcription.

The enzyme catalyses RNA(n) + a ribonucleoside 5'-triphosphate = RNA(n+1) + diphosphate. Functionally, DNA-dependent RNA polymerase catalyzes the transcription of DNA into RNA using the four ribonucleoside triphosphates as substrates. The chain is DNA-directed RNA polymerase subunit alpha from Rhodopseudomonas palustris (strain BisB18).